The sequence spans 288 residues: MLLGAIEAGGTKFVCATGAENGQVSDRISIPTTTPVETMTAVDDYFTTHPVDAIGIGSFGPIGVNPHDPKYGYITTTPKPGWGDFDFLGHLKSQFNIPLYWTTDVNEAAYGESMIGIAKDVPNSIYMTIGTGVGAGVISQNHIFNGRTHTELGHMRLNRLPGDDFKSNCPYHDICLEGLAAGPAVGKRTGKAGKDIPVDDPVWPIITDYIAQACVNLTVAFAPDKIILNGGVMNQRQLFPMIREKFAAYLNGYEEVPPLDDYIVPAGLGNNSGIAGGLLLAQAALKNA.

An ATP-binding site is contributed by T131. Zn(2+) is bound by residues H154, C169, H172, and C175. Residues P183 and 231–235 (GVMNQ) contribute to the ATP site.

This sequence belongs to the ROK (NagC/XylR) family. Mg(2+) is required as a cofactor.

The enzyme catalyses D-fructose + ATP = D-fructose 6-phosphate + ADP + H(+). Inhibition by zinc ions. The chain is Fructokinase (scrK) from Pediococcus pentosaceus.